The primary structure comprises 104 residues: Large ribosomal subunit protein uL24 (104 aa).

Belongs to the universal ribosomal protein uL24 family. Part of the 50S ribosomal subunit.

Its function is as follows. One of two assembly initiator proteins, it binds directly to the 5'-end of the 23S rRNA, where it nucleates assembly of the 50S subunit. In terms of biological role, one of the proteins that surrounds the polypeptide exit tunnel on the outside of the subunit. The polypeptide is Large ribosomal subunit protein uL24 (Neorickettsia sennetsu (strain ATCC VR-367 / Miyayama) (Ehrlichia sennetsu)).